We begin with the raw amino-acid sequence, 240 residues long: UDP-2,3-diacylglucosamine hydrolase (240 aa).

The Mn(2+) site is built by aspartate 8, histidine 10, aspartate 41, asparagine 79, and histidine 114. 79 to 80 (NR) lines the substrate pocket. Substrate contacts are provided by aspartate 122, serine 160, asparagine 164, lysine 167, and histidine 195. Residues histidine 195 and histidine 197 each contribute to the Mn(2+) site.

The protein belongs to the LpxH family. It depends on Mn(2+) as a cofactor.

It localises to the cell inner membrane. It carries out the reaction UDP-2-N,3-O-bis[(3R)-3-hydroxytetradecanoyl]-alpha-D-glucosamine + H2O = 2-N,3-O-bis[(3R)-3-hydroxytetradecanoyl]-alpha-D-glucosaminyl 1-phosphate + UMP + 2 H(+). It functions in the pathway glycolipid biosynthesis; lipid IV(A) biosynthesis; lipid IV(A) from (3R)-3-hydroxytetradecanoyl-[acyl-carrier-protein] and UDP-N-acetyl-alpha-D-glucosamine: step 4/6. Its function is as follows. Hydrolyzes the pyrophosphate bond of UDP-2,3-diacylglucosamine to yield 2,3-diacylglucosamine 1-phosphate (lipid X) and UMP by catalyzing the attack of water at the alpha-P atom. Involved in the biosynthesis of lipid A, a phosphorylated glycolipid that anchors the lipopolysaccharide to the outer membrane of the cell. The sequence is that of UDP-2,3-diacylglucosamine hydrolase from Enterobacter sp. (strain 638).